A 140-amino-acid polypeptide reads, in one-letter code: ATP synthase epsilon chain (140 aa).

It belongs to the ATPase epsilon chain family. As to quaternary structure, F-type ATPases have 2 components, CF(1) - the catalytic core - and CF(0) - the membrane proton channel. CF(1) has five subunits: alpha(3), beta(3), gamma(1), delta(1), epsilon(1). CF(0) has three main subunits: a, b and c.

It is found in the cell inner membrane. Produces ATP from ADP in the presence of a proton gradient across the membrane. In Chromobacterium violaceum (strain ATCC 12472 / DSM 30191 / JCM 1249 / CCUG 213 / NBRC 12614 / NCIMB 9131 / NCTC 9757 / MK), this protein is ATP synthase epsilon chain.